Consider the following 356-residue polypeptide: Phosphoribosylformylglycinamidine cyclo-ligase (356 aa).

The protein belongs to the AIR synthase family.

Its subcellular location is the cytoplasm. The catalysed reaction is 2-formamido-N(1)-(5-O-phospho-beta-D-ribosyl)acetamidine + ATP = 5-amino-1-(5-phospho-beta-D-ribosyl)imidazole + ADP + phosphate + H(+). It functions in the pathway purine metabolism; IMP biosynthesis via de novo pathway; 5-amino-1-(5-phospho-D-ribosyl)imidazole from N(2)-formyl-N(1)-(5-phospho-D-ribosyl)glycinamide: step 2/2. In Acinetobacter baylyi (strain ATCC 33305 / BD413 / ADP1), this protein is Phosphoribosylformylglycinamidine cyclo-ligase.